Reading from the N-terminus, the 245-residue chain is Carboxy-S-adenosyl-L-methionine synthase (245 aa).

S-adenosyl-L-methionine is bound by residues Tyr-39, 64–66 (GSS), 117–118 (DI), and Arg-199.

Belongs to the class I-like SAM-binding methyltransferase superfamily. Cx-SAM synthase family. As to quaternary structure, homodimer.

It carries out the reaction prephenate + S-adenosyl-L-methionine = carboxy-S-adenosyl-L-methionine + 3-phenylpyruvate + H2O. Functionally, catalyzes the conversion of S-adenosyl-L-methionine (SAM) to carboxy-S-adenosyl-L-methionine (Cx-SAM). The chain is Carboxy-S-adenosyl-L-methionine synthase from Desulfotalea psychrophila (strain LSv54 / DSM 12343).